The primary structure comprises 513 residues: Ribonuclease Y (513 aa).

A helical transmembrane segment spans residues 3–23; sequence IGTLLLFTFLGLVAGATAVWL. Residues 77-96 are disordered; that stretch reads LQSVESKLKSREQTLNQRQE. The segment covering 82-96 has biased composition (basic and acidic residues); the sequence is SKLKSREQTLNQRQE. Residues 203–263 form the KH domain; it reads SVTVFHIESD…VRREIARLAL (61 aa). The HD domain occupies 329-422; it reads LLQHSRETAN…VQVCDAISGA (94 aa).

This sequence belongs to the RNase Y family.

The protein resides in the cell membrane. Its function is as follows. Endoribonuclease that initiates mRNA decay. In Porphyromonas gingivalis (strain ATCC BAA-308 / W83), this protein is Ribonuclease Y.